Consider the following 122-residue polypeptide: Small ribosomal subunit protein uS13 (122 aa).

The segment at G95–K122 is disordered.

It belongs to the universal ribosomal protein uS13 family. In terms of assembly, part of the 30S ribosomal subunit. Forms a loose heterodimer with protein S19. Forms two bridges to the 50S subunit in the 70S ribosome.

Its function is as follows. Located at the top of the head of the 30S subunit, it contacts several helices of the 16S rRNA. In the 70S ribosome it contacts the 23S rRNA (bridge B1a) and protein L5 of the 50S subunit (bridge B1b), connecting the 2 subunits; these bridges are implicated in subunit movement. Contacts the tRNAs in the A and P-sites. This is Small ribosomal subunit protein uS13 from Zymomonas mobilis subsp. mobilis (strain ATCC 31821 / ZM4 / CP4).